We begin with the raw amino-acid sequence, 492 residues long: Gamma-aminobutyric acid receptor subunit alpha-3 (492 aa).

Residues 1–28 (MIITQTSHCYMTSLGILFLINILPGTTG) form the signal peptide. The interval 28–54 (GQGESRRQEPGDFVKQDIGGLSPKHAP) is disordered. The Extracellular portion of the chain corresponds to 29–274 (QGESRRQEPG…MTTHFHLKRK (246 aa)). The segment covering 31–42 (ESRRQEPGDFVK) has biased composition (basic and acidic residues). An N-linked (GlcNAc...) asparagine glycan is attached at Asn-63. Arg-119 contributes to the 4-aminobutanoate binding site. Asn-163 and Asn-176 each carry an N-linked (GlcNAc...) asparagine glycan. Thr-182 provides a ligand contact to 4-aminobutanoate. Cys-191 and Cys-205 are oxidised to a cystine. Asn-228 carries N-linked (GlcNAc...) asparagine glycosylation. A helical transmembrane segment spans residues 275 to 295 (IGYFVIQTYLPCIMTVILSQV). The Cytoplasmic portion of the chain corresponds to 296 to 305 (SFWLNRESVP). The helical transmembrane segment at 306–325 (ARTVFGVTTVLTMTTLSISA) threads the bilayer. Residues 326–336 (RNSLPKVAYAT) are Extracellular-facing. A helical membrane pass occupies residues 337 to 357 (AMDWFIAVCYAFVFSALIEFA). Over 358 to 457 (TVNYFTKRSW…TYNSVSKVDK (100 aa)) the chain is Cytoplasmic. At Ser-426 the chain carries Phosphoserine. Phosphothreonine is present on Thr-427. Phosphoserine is present on residues Ser-433 and Ser-442. The chain crosses the membrane as a helical span at residues 458-478 (ISRIIFPVLFAIFNLVYWATY). Over 479 to 492 (VNRESAIKGMIRKQ) the chain is Extracellular.

The protein belongs to the ligand-gated ion channel (TC 1.A.9) family. Gamma-aminobutyric acid receptor (TC 1.A.9.5) subfamily. GABRA3 sub-subfamily. In terms of assembly, heteropentamer, formed by a combination of alpha (GABRA1-6), beta (GABRB1-3), gamma (GABRG1-3), delta (GABRD), epsilon (GABRE), rho (GABRR1-3), pi (GABRP) and theta (GABRQ) chains, each subunit exhibiting distinct physiological and pharmacological properties. Binds UBQLN1. Interacts with GPHN.

Its subcellular location is the postsynaptic cell membrane. It localises to the cell membrane. It carries out the reaction chloride(in) = chloride(out). With respect to regulation, potentiated by etomidate, propofol, pregnanolone and flurazepam. In terms of biological role, alpha subunit of the heteropentameric ligand-gated chloride channel gated by gamma-aminobutyric acid (GABA), a major inhibitory neurotransmitter in the brain. GABA-gated chloride channels, also named GABA(A) receptors (GABAAR), consist of five subunits arranged around a central pore and contain GABA active binding site(s) located at the alpha and beta subunit interface(s). When activated by GABA, GABAARs selectively allow the flow of chloride anions across the cell membrane down their electrochemical gradient. Chloride influx into the postsynaptic neuron following GABAAR opening decreases the neuron ability to generate a new action potential, thereby reducing nerve transmission. The chain is Gamma-aminobutyric acid receptor subunit alpha-3 from Homo sapiens (Human).